We begin with the raw amino-acid sequence, 81 residues long: Alpha-toxin Ac1 (81 aa).

The first 17 residues, 1-17 (YIVMISLALVVMIGVES), serve as a signal peptide directing secretion. In terms of domain architecture, LCN-type CS-alpha/beta spans 19-80 (RDGYIVYPNN…PIKDPSQKCT (62 aa)). 4 disulfide bridges follow: Cys29–Cys79, Cys33–Cys51, Cys37–Cys61, and Cys41–Cys63.

This sequence belongs to the long (4 C-C) scorpion toxin superfamily. Sodium channel inhibitor family. Alpha subfamily. In terms of tissue distribution, expressed by the venom gland.

The protein resides in the secreted. Its function is as follows. Alpha toxins bind voltage-independently at site-3 of sodium channels (Nav) and inhibit the inactivation of the activated channels, thereby blocking neuronal transmission. The polypeptide is Alpha-toxin Ac1 (Androctonus crassicauda (Arabian fat-tailed scorpion)).